The chain runs to 217 residues: Probable transaldolase (217 aa).

The active-site Schiff-base intermediate with substrate is the Lys-83.

The protein belongs to the transaldolase family. Type 3B subfamily.

The protein resides in the cytoplasm. It carries out the reaction D-sedoheptulose 7-phosphate + D-glyceraldehyde 3-phosphate = D-erythrose 4-phosphate + beta-D-fructose 6-phosphate. It participates in carbohydrate degradation; pentose phosphate pathway; D-glyceraldehyde 3-phosphate and beta-D-fructose 6-phosphate from D-ribose 5-phosphate and D-xylulose 5-phosphate (non-oxidative stage): step 2/3. Transaldolase is important for the balance of metabolites in the pentose-phosphate pathway. The protein is Probable transaldolase of Rhizorhabdus wittichii (strain DSM 6014 / CCUG 31198 / JCM 15750 / NBRC 105917 / EY 4224 / RW1) (Sphingomonas wittichii).